A 466-amino-acid chain; its full sequence is UDP-N-acetylglucosamine--dolichyl-phosphate N-acetylglucosaminephosphotransferase (466 aa).

A helical membrane pass occupies residues 12 to 32 (AAFAVAAHAPVLGLILLGSIV). Residue aspartate 57 coordinates UDP-N-acetyl-alpha-D-glucosamine. N-linked (GlcNAc...) asparagine glycosylation occurs at asparagine 59. Position 90 (glutamate 90) interacts with UDP-N-acetyl-alpha-D-glucosamine. 2 consecutive transmembrane segments (helical) span residues 91 to 111 (SLGILVGAMYLSVVVVLTVCL) and 124 to 144 (PYASLPGPLMTITVMLLLGFV). Lysine 155 contributes to the dolichyl phosphate binding site. The next 2 membrane-spanning stretches (helical) occupy residues 156-176 (IILTALGSLPLIMTYDGSLSV) and 236-256 (GAALIYLGPVYLVYLSMLCIF). 255–263 (IFCTNSINI) lines the dolichyl phosphate pocket. Asparagine 262 provides a ligand contact to Mg(2+). 4 helical membrane-spanning segments follow: residues 263 to 283 (ILAGVNGVEVGQSIVIAVASV), 316 to 336 (DHQLRALLLLGPFIGVSLALW), 345 to 365 (VFVGDSYTYFAGTVLAVSSIT), and 374 to 394 (LFFAPQVFNFLISLPQLFSIV). Asparagine 268 lines the UDP-N-acetyl-alpha-D-glucosamine pocket. Position 349 (aspartate 349) interacts with Mg(2+). 398-400 (RHR) lines the UDP-N-acetyl-alpha-D-glucosamine pocket. N-linked (GlcNAc...) asparagine glycosylation occurs at asparagine 416. A helical transmembrane segment spans residues 442 to 462 (CQVIACVLGFVVRYVLSAFLY).

The protein belongs to the glycosyltransferase 4 family. It depends on Mg(2+) as a cofactor.

It is found in the endoplasmic reticulum membrane. It carries out the reaction a di-trans,poly-cis-dolichyl phosphate + UDP-N-acetyl-alpha-D-glucosamine = an N-acetyl-alpha-D-glucosaminyl-diphospho-di-trans,poly-cis-dolichol + UMP. The protein operates within protein modification; protein glycosylation. With respect to regulation, inhibited by natural nucleoside antibiotic tunicamycin, which acts as a structural analog and competitor of UDP-GlcNAc. Its function is as follows. UDP-N-acetylglucosamine--dolichyl-phosphate N-acetylglucosaminephosphotransferase that operates in the biosynthetic pathway of dolichol-linked oligosaccharides, the glycan precursors employed in protein asparagine (N)-glycosylation. The assembly of dolichol-linked oligosaccharides begins on the cytosolic side of the endoplasmic reticulum membrane and finishes in its lumen. The sequential addition of sugars to dolichol pyrophosphate produces dolichol-linked oligosaccharides containing fourteen sugars, including two GlcNAcs, nine mannoses and three glucoses. Once assembled, the oligosaccharide is transferred from the lipid to nascent proteins by oligosaccharyltransferases. Catalyzes the initial step of dolichol-linked oligosaccharide biosynthesis, transfering GlcNAc-1-P from cytosolic UDP-GlcNAc onto the carrier lipid dolichyl phosphate (P-dolichol), yielding GlcNAc-P-P-dolichol embedded in the cytoplasmic leaflet of the endoplasmic reticulum membrane. In Leishmania amazonensis, this protein is UDP-N-acetylglucosamine--dolichyl-phosphate N-acetylglucosaminephosphotransferase (NAGT).